Reading from the N-terminus, the 82-residue chain is RNA-binding protein GK0100 (82 aa).

This sequence belongs to the eukaryotic ribosomal protein eL8 family.

In Geobacillus kaustophilus (strain HTA426), this protein is RNA-binding protein GK0100.